Consider the following 398-residue polypeptide: MQSSSLNNYNSNKNFIIMLIILFLMEFARGMYILSYLALLPTATSIAVGITSIAISIHFIADATTNFVIGFLLKRLGTKLVLTLGFLLAFASLFLVIWFPTSPFVLIASAILLGIAVSPIWVIMLASVDENNRGKQMGYVYFSWLLGLLVGMVGMNVIFKFHPTQFAFLMSLVVLIAWILYYFVKVRLTNYNTRPVKQQLGQIVDVTKRHMILFPGILLQGASITALVPILPTYATKVVGVSTLEYTMAIVFGGIGCAISMLFLSKIIDKHGTLFMYWVIFGGFVLYTLMIFALSLITNITIVWVLAVFIGLMYGILLPAWNTFMASHIHSDEQEETWGVFNSVQGFGSMIGPLVGGLITEFTKSVNNTFYFSALVFLFLAIFYGIYFVKVNNKTKTS.

12 helical membrane passes run 15–40 (FIIM…LALL), 46–73 (IAVG…GFLL), 80–99 (LVLT…VIWF), 105–126 (VLIA…IMLA), 138–159 (GYVY…NVIF), 165–184 (QFAF…YYFV), 212–234 (ILFP…LPTY), 246–264 (YTMA…MLFL), 276–297 (MYWV…LSLI), 303–326 (VWVL…TFMA), 338–359 (WGVF…GGLI), and 371–389 (YFSA…IYFV).

Belongs to the major facilitator superfamily. LtaA family.

It is found in the cell membrane. It participates in cell wall biogenesis; lipoteichoic acid biosynthesis. Proton-coupled antiporter flippase that catalyzes the translocation, from the inner to the outer leaflet of the cell membrane, of the lipid-linked disaccharide (anchor-LLD) that anchors lipoteichoic acids (LTA) to the cell membrane. The sequence is that of Proton-coupled antiporter flippase LtaA (ltaA) from Staphylococcus saprophyticus subsp. saprophyticus (strain ATCC 15305 / DSM 20229 / NCIMB 8711 / NCTC 7292 / S-41).